The primary structure comprises 254 residues: Protein U52 (254 aa).

Belongs to the herpesviridae UL79 family.

The protein is Protein U52 (U52) of Homo sapiens (Human).